Consider the following 142-residue polypeptide: MPFSASDRHDITHLWEKMAPNVEFLGEEAMERLFKSHPKTKTYFSHLNVEHGSAAVRAQGAKVLNAIGHASKNLDHLDEALSNLSDKHAHDLRVDPGNFHLLCHNILVVLAIHFPEDFTPRAHAAFDKFLAAVSETLYSKYR.

Positions Pro-2–Arg-142 constitute a Globin domain. O2 is bound at residue Gln-59. His-88 is a heme b binding site.

It belongs to the globin family. In terms of assembly, heterotetramer of either two alpha-B chains or two alpha-C chains and two beta chains. The two major hemoglobins, B and C, associate upon deoxygenation to form a trimer of tetramers, BC2, that has a much lower affinity for oxygen than either component alone. Red blood cells.

In terms of biological role, the alpha-B chain is a component of adult hemoglobin B. The polypeptide is Hemoglobin subunit alpha-B (Aquarana catesbeiana (American bullfrog)).